The sequence spans 200 residues: Adenylate kinase (200 aa).

An ATP-binding site is contributed by 10–15 (GAGKGT). Positions 30–59 (STGDMLRAAVAAETPVGLEAKAIMESGGLV) are NMP. AMP contacts are provided by residues threonine 31, arginine 36, 57-59 (GLV), 85-88 (GFPR), and glutamine 92. The LID stretch occupies residues 126–142 (KRAEETAARGQPVRKDD). An ATP-binding site is contributed by arginine 127. AMP-binding residues include arginine 139 and arginine 150. Position 178 (lysine 178) interacts with ATP.

It belongs to the adenylate kinase family. Monomer.

It localises to the cytoplasm. It catalyses the reaction AMP + ATP = 2 ADP. It functions in the pathway purine metabolism; AMP biosynthesis via salvage pathway; AMP from ADP: step 1/1. Catalyzes the reversible transfer of the terminal phosphate group between ATP and AMP. Plays an important role in cellular energy homeostasis and in adenine nucleotide metabolism. This Methylorubrum extorquens (strain PA1) (Methylobacterium extorquens) protein is Adenylate kinase.